A 47-amino-acid polypeptide reads, in one-letter code: Diuretic hormone 2 (47 aa).

This sequence belongs to the sauvagine/corticotropin-releasing factor/urotensin I family.

Its subcellular location is the secreted. Stimulates fluid secretion by the Malpighian tubules. Increases cyclic AMP production in Malpighian tubules. This Tenebrio molitor (Yellow mealworm beetle) protein is Diuretic hormone 2.